Reading from the N-terminus, the 113-residue chain is uncharacterized protein (113 aa).

The signal sequence occupies residues 1–16 (MKCLVVLTALFGISTA). The segment covering 81-101 (GGNGGNGGGGNGGNNGNGNGN) has biased composition (gly residues). Residues 81–103 (GGNGGNGGGGNGGNNGNGNGNNG) form a disordered region.

As to expression, nacreous layer of shell (at protein level).

The protein resides in the secreted. This is an uncharacterized protein from Margaritifera margaritifera (Freshwater pearl mussel).